Reading from the N-terminus, the 174-residue chain is Co-chaperone protein HscB homolog (174 aa).

One can recognise a J domain in the interval N2–L74.

It belongs to the HscB family. In terms of assembly, interacts with HscA and stimulates its ATPase activity.

Functionally, co-chaperone involved in the maturation of iron-sulfur cluster-containing proteins. Seems to help targeting proteins to be folded toward HscA. In Shewanella amazonensis (strain ATCC BAA-1098 / SB2B), this protein is Co-chaperone protein HscB homolog.